The primary structure comprises 495 residues: Maternal protein exuperantia-1 (495 aa).

Disordered regions lie at residues 197 to 217 (DESA…SSND) and 377 to 495 (TIKP…AATN). Composition is skewed to polar residues over residues 207–216 (ENVNRNGSSN) and 398–414 (AASS…TSTE).

Its function is as follows. Ensures the proper localization of the mRNA of the bicoid gene to the anterior regions of the oocyte thus playing a fundamental role in the establishment of the polarity of the oocyte. May bind the bcd mRNA. The polypeptide is Maternal protein exuperantia-1 (exu1) (Drosophila pseudoobscura pseudoobscura (Fruit fly)).